The following is a 345-amino-acid chain: Tetraacyldisaccharide 4'-kinase (345 aa).

51–58 (HVGGAGKT) lines the ATP pocket.

Belongs to the LpxK family.

The catalysed reaction is a lipid A disaccharide + ATP = a lipid IVA + ADP + H(+). Its pathway is glycolipid biosynthesis; lipid IV(A) biosynthesis; lipid IV(A) from (3R)-3-hydroxytetradecanoyl-[acyl-carrier-protein] and UDP-N-acetyl-alpha-D-glucosamine: step 6/6. In terms of biological role, transfers the gamma-phosphate of ATP to the 4'-position of a tetraacyldisaccharide 1-phosphate intermediate (termed DS-1-P) to form tetraacyldisaccharide 1,4'-bis-phosphate (lipid IVA). This Bradyrhizobium sp. (strain BTAi1 / ATCC BAA-1182) protein is Tetraacyldisaccharide 4'-kinase.